A 340-amino-acid chain; its full sequence is MTTYKDAGVDVEAGYEAVRLMRNDVKRTFRPEVLTDIGGFGGLFGLNKDKYSEPVLVSGTDGVGTKLKIAFLLDKHDTVGIDCVAMCVNDIVCSGAEPLFFLDYIALGKNRPEKVAQIVKGIADGCVEAGCALIGGETAEMPGFYPEDEYDLAGFAVGIVEKSKIIDGSKIKAGDKLIGLASSGIHSNGYSLVRKILAPTAKKLAEEIKMLGTTLGEELIKPTRLYVKTILDLKEKFEIKGIAHITGGGFIENIPRMLPQGLGVKVVRGSWPVLPIFTLLKDLGNLDEMDMYNTFNMGIGMTIAVDAEIANSVVEYLNKDKEQAYIIGEVVSDKEGLEIC.

The protein belongs to the AIR synthase family.

It localises to the cytoplasm. It carries out the reaction 2-formamido-N(1)-(5-O-phospho-beta-D-ribosyl)acetamidine + ATP = 5-amino-1-(5-phospho-beta-D-ribosyl)imidazole + ADP + phosphate + H(+). The protein operates within purine metabolism; IMP biosynthesis via de novo pathway; 5-amino-1-(5-phospho-D-ribosyl)imidazole from N(2)-formyl-N(1)-(5-phospho-D-ribosyl)glycinamide: step 2/2. In Acetivibrio thermocellus (strain ATCC 27405 / DSM 1237 / JCM 9322 / NBRC 103400 / NCIMB 10682 / NRRL B-4536 / VPI 7372) (Clostridium thermocellum), this protein is Phosphoribosylformylglycinamidine cyclo-ligase.